Here is a 101-residue protein sequence, read N- to C-terminus: Apolipoprotein C-II (101 aa).

The signal sequence occupies residues 1 to 22; sequence MGTRFLLALFLVLLVLGFEVQG. Positions 66-74 are lipid binding; that stretch reads TVDEKLRDM. Residues 78 to 101 form a lipoprotein lipase cofactor region; it reads STAAMSTYAGILTDQVLSMLKGEE.

Belongs to the apolipoprotein C2 family. Post-translationally, proapolipoprotein C-II is synthesized as a sialic acid containing glycoprotein which is subsequently desialylated prior to its proteolytic processing. In terms of processing, proapolipoprotein C-II, the major form found in plasma undergoes proteolytic cleavage of its N-terminal hexapeptide to generate apolipoprotein C-II, which occurs as the minor form in plasma.

It localises to the secreted. In terms of biological role, component of chylomicrons, very low-density lipoproteins (VLDL), low-density lipoproteins (LDL), and high-density lipoproteins (HDL) in plasma. Plays an important role in lipoprotein metabolism as an activator of lipoprotein lipase. Both proapolipoprotein C-II and apolipoprotein C-II can activate lipoprotein lipase. The sequence is that of Apolipoprotein C-II (APOC2) from Plecturocebus moloch (Dusky titi monkey).